Reading from the N-terminus, the 325-residue chain is Tetraacyldisaccharide 4'-kinase (325 aa).

55–62 (TAGGNGKT) lines the ATP pocket.

The protein belongs to the LpxK family.

It catalyses the reaction a lipid A disaccharide + ATP = a lipid IVA + ADP + H(+). It participates in glycolipid biosynthesis; lipid IV(A) biosynthesis; lipid IV(A) from (3R)-3-hydroxytetradecanoyl-[acyl-carrier-protein] and UDP-N-acetyl-alpha-D-glucosamine: step 6/6. Functionally, transfers the gamma-phosphate of ATP to the 4'-position of a tetraacyldisaccharide 1-phosphate intermediate (termed DS-1-P) to form tetraacyldisaccharide 1,4'-bis-phosphate (lipid IVA). This is Tetraacyldisaccharide 4'-kinase from Salmonella paratyphi C (strain RKS4594).